A 508-amino-acid polypeptide reads, in one-letter code: MTVTYTARVANARFGGFSQLLLLWRGSIYKLLWRELLCFLGLYMALSAAYRFLLAEEQKRYFEKLVIYCDQYASLIPVSFVLGFYVTLVVHRWWNQYLCMPLPDALMCIVAGTVHGRDDRGRLYRRTLMRYAGLSAVLILRSVSTAVFKRFPTIDHVVEAGFMTREERKKFENLNSSYNKYWVPCVWFSSLAAQARREGRIRDNSALKLLLEELNVFRSKCGMLFHYDWISIPLVYTQVVTIAVYSYFLACLIGRQFLDPAQGYKDHTLDLCVPIFTLLQFFFYAGWLKVAEQLINPFGEDDDDFETNFLIDRNFQVSMLAVDEMYDDLAMLEKDLYWDAAEARAPYTAATAFLLQQPSFQGSTFDIALAKEDMQFQRLDGVDGPLGEVHGDFLQRLLPAGAGSVGPLGRRLSLLRRKNSCVSEASTAASCGCAGAADGGGVECGCGDPLLDPSLREPELEPPACPEPPAPIPGPTPEPFTTVSIPGPRAPAPPWLPSPIGEEEESPA.

At 1 to 31 (MTVTYTARVANARFGGFSQLLLLWRGSIYKL) the chain is on the cytoplasmic side. Ala10 lines the Ca(2+) pocket. The chain crosses the membrane as a helical span at residues 32 to 51 (LWRELLCFLGLYMALSAAYR). Residues 52–60 (FLLAEEQKR) are Extracellular-facing. Residues 61 to 82 (YFEKLVIYCDQYASLIPVSFVL) traverse the membrane as a helical segment. Over 83 to 238 (GFYVTLVVHR…WISIPLVYTQ (156 aa)) the chain is Cytoplasmic. A helical transmembrane segment spans residues 239 to 255 (VVTIAVYSYFLACLIGR). The Extracellular portion of the chain corresponds to 256-274 (QFLDPAQGYKDHTLDLCVP). Residues 275 to 288 (IFTLLQFFFYAGWL) form a helical membrane-spanning segment. Topologically, residues 289–508 (KVAEQLINPF…PIGEEEESPA (220 aa)) are cytoplasmic. The Ca(2+) site is built by Gln293, Asn296, Asp301, and Asp304. A disordered region spans residues 455 to 508 (LREPELEPPACPEPPAPIPGPTPEPFTTVSIPGPRAPAPPWLPSPIGEEEESPA). Pro residues-rich tracts occupy residues 461 to 478 (EPPACPEPPAPIPGPTPE) and 488 to 497 (PRAPAPPWLP).

The protein belongs to the anion channel-forming bestrophin (TC 1.A.46) family. Calcium-sensitive chloride channel subfamily. Pentamer. Interacts with GLUL; this interaction tethers a fraction of GLUL to the membrane, causing a decrease of cytosolic glutamine synthase (GS) activity and inhibits the chloride channel activity of BEST2 by affecting the gating at the aperture in the absence of intracellular glutamate. As to expression, expressed in mucin-secreting colonic goblet cells.

Its subcellular location is the cell membrane. The protein localises to the basolateral cell membrane. It catalyses the reaction chloride(in) = chloride(out). It carries out the reaction hydrogencarbonate(in) = hydrogencarbonate(out). The enzyme catalyses L-glutamate(out) = L-glutamate(in). The catalysed reaction is iodide(out) = iodide(in). It catalyses the reaction L-glutamine(out) = L-glutamine(in). Chloride channel activity is allosterically inhibited by GLUL/glutamine synthase (GS) which affects the gating at the aperture in the absence of intracellular glutamate. Inhibitory effect of GLUL is relieved upon increasing of intracellular level of L-glutamate. In terms of biological role, ligand-gated anion channel that allows the movement of anions across cell membranes when activated by calcium (Ca2+). Transports a large specter of anions, namely mediates the movement of chloride, L-glutamate and iodide. Calcium-binding triggers the dilation of the aperture, but calcium-dependent gating is only effective when the size of the passing anion is bigger than the closed aperture. Mediates the calcium-activated hydrogencarbonate movement and participates in colonic hydrogencarbonate secretion concomitant with mucin secretion. In non-pigmented epithelium (NPE), mediates the efflux of intracellular L-glutamate; binding of intracellular L-glutamate activates and open both the neck and the aperture of the channel, leading to L-glutamate exit promoting chloride influx movement from the extracellular side in trans. Also exhibits a directional permeability for intracellular glutamine, in a similar manner as for L-glutamate. In Mus musculus (Mouse), this protein is Bestrophin-2.